The chain runs to 201 residues: L(+)-tartrate dehydratase subunit beta (201 aa).

His37 is a catalytic residue.

Belongs to the class-I fumarase family. Heterotetramer of two alpha and two beta subunits.

It catalyses the reaction (2R,3R)-tartrate = oxaloacetate + H2O. The chain is L(+)-tartrate dehydratase subunit beta (ttdB) from Escherichia coli O6:K15:H31 (strain 536 / UPEC).